We begin with the raw amino-acid sequence, 192 residues long: Thiol-disulfide oxidoreductase ResA (192 aa).

Residues 22-41 (SSILLILVAAVVFAIVSNMK) traverse the membrane as a helical; Signal-anchor for type II membrane protein segment. A Thioredoxin domain is found at 47-189 (YRVGDAAPDF…LEGYLNDIAP (143 aa)). The cysteines at positions 89 and 92 are disulfide-linked.

Belongs to the thioredoxin family. ResA subfamily.

It localises to the cell membrane. Its pathway is protein modification; cytochrome c assembly. Functionally, thiol-disulfide oxidoreductase which is required in disulfide reduction during c-type cytochrome synthesis. May accept reducing equivalents from CcdA, leading to breakage of disulfide bonds in apocytochrome c; following this reduction heme can be covalently attached. The sequence is that of Thiol-disulfide oxidoreductase ResA from Oceanobacillus iheyensis (strain DSM 14371 / CIP 107618 / JCM 11309 / KCTC 3954 / HTE831).